The following is a 930-amino-acid chain: Urea transporter 2 (930 aa).

The span at 1–11 (MSDHHPLKEMS) shows a compositional bias: basic and acidic residues. Residues 1–90 (MSDHHPLKEM…KRRESEVSRR (90 aa)) form a disordered region. Composition is skewed to low complexity over residues 12 to 25 (DSNS…PLSS) and 32 to 43 (SELSSPTWPSSS). The segment covering 56–89 (PEEKDLRSSDEDSHIVKIEKPNERNKRRESEVSR) has biased composition (basic and acidic residues). 8 helical membrane-spanning segments follow: residues 145–165 (ISGL…TIAG), 185–205 (AIAS…MAVF), 213–233 (WWLL…SSAL), 242–262 (LPVF…ATGH), 280–300 (NITW…VGVG), 311–331 (GGVI…HAAI), 350–372 (IYLG…MFYA), and 401–421 (VVGV…FLLL). The interval 452–479 (SEEEKSPNGGSGEQSHGSGQWKAEESSE) is disordered. Serine 487 bears the Phosphoserine mark. Transmembrane regions (helical) follow at residues 610-630 (GILI…SGCL), 648-668 (AIAA…MAVF), 676-696 (WWLL…SSAL), and 705-725 (LPVF…ATGH). Asparagine 743 is a glycosylation site (N-linked (GlcNAc...) asparagine). The next 4 helical transmembrane spans lie at 774–794 (GGIF…HAAI), 813–833 (IYFG…GGMF), 842–862 (LLAI…ANML), and 864–884 (VFGL…FLLL).

This sequence belongs to the urea transporter family. In terms of tissue distribution, highly expressed in kidney medulla (at protein level). Also detected in testes, heart, brain and liver (at protein level). In the kidney, present in thin descending limbs of the loop of Henle and in the middle and terminal inner medullary collecting ducts. As to expression, expressed in the kidney medulla. Expressed in the peritubular myoid cells forming the outermost layer of the seminiferous tubules within the testes and is not detected in kidney. Expression levels are coordinated with the stage of testes development and increase 15 days postpartum, commensurate with the start of seminiferous tubule fluid movement.

It localises to the apical cell membrane. It is found in the basolateral cell membrane. It carries out the reaction urea(in) = urea(out). Inhibited by phloretin. Activated by forskolin, 3-isobutyl-1-methylxanthine (IBMX) and cAMP. Its activity is regulated as follows. Inhibited by phloretin. With respect to regulation, inhibited by phloretin. Activated by forskolin, 3-isobutyl-1-methylxanthine (IBMX) and cAMP. In terms of biological role, mediates the transport of urea driven by a concentration gradient across the cell membrane of the renal inner medullary collecting duct which is critical to the urinary concentrating mechanism. Its function is as follows. Mediates the transport of urea driven by a concentration gradient across the cell membrane. Implicated in the urea movement across the blood-testis barrier and does not translocate water. This Mus musculus (Mouse) protein is Urea transporter 2 (Slc14a2).